A 446-amino-acid polypeptide reads, in one-letter code: Transcription factor Dp-2 (446 aa).

An N-acetylthreonine modification is found at threonine 2. A Phosphoserine modification is found at serine 24. Residues 60–82 (PQMIISTPQRLTSSGSVLIGSPY) form an interaction with CEBPA region. The Nuclear localization signal motif lies at 103–118 (GDRKRARKFIDSDFSE). Phosphoserine is present on serine 122. The DNA-binding element occupies 129–210 (GKGLRHFSMK…KKEIKWIGLP (82 aa)). Positions 176 to 210 (DQKNIRRRVYDALNVLMAMNIISKEKKEIKWIGLP) match the DEF box motif. The interval 219-292 (NLEIEKQRRI…RKTVIDCSIS (74 aa)) is dimerization. Positions 229–261 (ERIKQKRAQLQELLLQQIAFKNLVQRNRQNEQQ) are DCB1. The segment at 274–330 (LPFIIINTSRKTVIDCSISSDKFEYLFNFDNTFEIHDDIEVLKRMGMSFGLESGKCS) is DCB2. Residues 409-419 (SHQSSSAASHC) show a composition bias toward low complexity. Positions 409–446 (SHQSSSAASHCSESRGETPCSFNDEDEEDDEEDSSSPE) are disordered. The segment covering 431–446 (NDEDEEDDEEDSSSPE) has biased composition (acidic residues).

This sequence belongs to the E2F/DP family. As to quaternary structure, component of the DRTF1/E2F transcription factor complex. Forms heterodimers with E2F family members. The complex can interact with hypophosphorylated retinoblastoma protein RB1 and related proteins (RBL1 and RBL2) that inhibit the E2F transactivation domain. During the cell cycle, RB becomes phosphorylated in mid-to-late G1 phase, detaches from the DRTF1/E2F complex rendering E2F transcriptionally active. Viral oncoproteins, notably E1A, T-antigen and HPV E7, are capable of sequestering RB protein, thus releasing the active complex. Interacts with GMCL. Component of the DREAM complex (also named LINC complex) at least composed of E2F4, E2F5, LIN9, LIN37, LIN52, LIN54, MYBL1, MYBL2, RBL1, RBL2, RBBP4, TFDP1 and TFDP2. The complex exists in quiescent cells where it represses cell cycle-dependent genes. It dissociates in S phase when LIN9, LIN37, LIN52 and LIN54 form a subcomplex that binds to MYBL2. The complex TFDP2:E2F1 interacts with CEBPA; the interaction prevents CEBPA binding to target genes promoters and represses its transcriptional activity. Ser-24 is probably phosphorylated by CDK2. In terms of tissue distribution, high levels in heart and skeletal muscle. Also found in placenta, kidney, brain, lung and liver. The presence as well as the abundance of the different transcripts appear to vary significantly in different tissues and cell lines.

The protein resides in the nucleus. Can stimulate E2F-dependent transcription. Binds DNA cooperatively with E2F family members through the E2 recognition site, 5'-TTTC[CG]CGC-3', found in the promoter region of a number of genes whose products are involved in cell cycle regulation or in DNA replication. The TFDP2:E2F complex functions in the control of cell-cycle progression from G1 to S phase. The E2F1:DP complex appears to mediate both cell proliferation and apoptosis. Blocks adipocyte differentiation by repressing CEBPA binding to its target gene promoters. This chain is Transcription factor Dp-2 (TFDP2), found in Homo sapiens (Human).